Here is a 152-residue protein sequence, read N- to C-terminus: Multiprotein-bridging factor 1 (152 aa).

2 stretches are compositionally biased toward polar residues: residues 1-11 (MSSDWDTNTVI) and 22-32 (PRQQVARTQGQ). Residues 1 to 32 (MSSDWDTNTVIGQRVRTGGSGPRQQVARTQGQ) form a disordered region. Positions 86-140 (IAKGRGDKGMTQKDLATRINEKPTVINDYEAGRAIPNQQILAKMERALGVKLRGK) constitute an HTH cro/C1-type domain. A DNA-binding region (H-T-H motif) is located at residues 97–116 (QKDLATRINEKPTVINDYEA).

It belongs to the MBF1 family.

Its function is as follows. Transcriptional coactivator that stimulates GCN4-dependent transcriptional activity by bridging the DNA-binding region of GCN4 and TBP (SPT15), thereby recruiting TBP to GCN4-bound promoters. Involved in induction of the ribosome quality control (RQC) pathway; a pathway that degrades nascent peptide chains during problematic translation. Required to prevent stalled ribosomes from frameshifting. The sequence is that of Multiprotein-bridging factor 1 (MBF1) from Eremothecium gossypii (strain ATCC 10895 / CBS 109.51 / FGSC 9923 / NRRL Y-1056) (Yeast).